A 460-amino-acid polypeptide reads, in one-letter code: MIASPLFAISPIDGRYSSKVIKLRNIFSEYAFLKFRVTIELLWLKKISLLQEFKIVYNKDVLNCLDRIIDNFSKKDALEIKILEKKTNHDVKSIEYFLQKKIFKCLGNHDILGLVHFGCTSEDINNLAYALMLKVSRRDIILPLWNKIIFEIKKIALLHHNVPMLSRTHGQPATPSTIGKELINFAYRLERQLKQFKNIEILGKINGSTGNYNALHFSHSSVDWHKISQEFVTSLGLFWNPYTTQIEPHDFISEFFSCLARVNTILINFNRDIWGYISLQYFNQTPKLDEIGSSVMPHKINPIDFENSEGNLGLSNAIISHLIEKLPISRWQRDLSDSTVLRNVGTVIAYSIIAYDSIILGLKKLKVNTSRLLQDLNHHWEILAEPIQTVMRKYGINDTYNELKNITRGKRVTSDIILKYVNSLKIPRNEKEKLLQLTPENYLGLSSKLVKIFNNSSELK.

N(6)-(1,2-dicarboxyethyl)-AMP is bound by residues 15–16 (RY), 88–90 (NHD), and 120–121 (TS). The Proton donor/acceptor role is filled by H169. Residue Q245 coordinates N(6)-(1,2-dicarboxyethyl)-AMP. The active-site Proton donor/acceptor is the S293. Residues S294, 299–301 (KIN), N307, R333, and 338–342 (STVLR) each bind N(6)-(1,2-dicarboxyethyl)-AMP.

Belongs to the lyase 1 family. Adenylosuccinate lyase subfamily. Homotetramer. Residues from neighboring subunits contribute catalytic and substrate-binding residues to each active site.

It catalyses the reaction N(6)-(1,2-dicarboxyethyl)-AMP = fumarate + AMP. It carries out the reaction (2S)-2-[5-amino-1-(5-phospho-beta-D-ribosyl)imidazole-4-carboxamido]succinate = 5-amino-1-(5-phospho-beta-D-ribosyl)imidazole-4-carboxamide + fumarate. It participates in purine metabolism; AMP biosynthesis via de novo pathway; AMP from IMP: step 2/2. The protein operates within purine metabolism; IMP biosynthesis via de novo pathway; 5-amino-1-(5-phospho-D-ribosyl)imidazole-4-carboxamide from 5-amino-1-(5-phospho-D-ribosyl)imidazole-4-carboxylate: step 2/2. In terms of biological role, catalyzes two reactions in de novo purine nucleotide biosynthesis. Catalyzes the breakdown of 5-aminoimidazole- (N-succinylocarboxamide) ribotide (SAICAR or 2-[5-amino-1-(5-phospho-beta-D-ribosyl)imidazole-4-carboxamido]succinate) to 5-aminoimidazole-4-carboxamide ribotide (AICAR or 5-amino-1-(5-phospho-beta-D-ribosyl)imidazole-4-carboxamide) and fumarate, and of adenylosuccinate (ADS or N(6)-(1,2-dicarboxyethyl)-AMP) to adenosine monophosphate (AMP) and fumarate. This chain is Adenylosuccinate lyase (purB), found in Buchnera aphidicola subsp. Baizongia pistaciae (strain Bp).